Consider the following 299-residue polypeptide: tRNA pseudouridine synthase B (299 aa).

Asp-38 serves as the catalytic Nucleophile.

Belongs to the pseudouridine synthase TruB family. Type 1 subfamily.

The enzyme catalyses uridine(55) in tRNA = pseudouridine(55) in tRNA. Its function is as follows. Responsible for synthesis of pseudouridine from uracil-55 in the psi GC loop of transfer RNAs. The polypeptide is tRNA pseudouridine synthase B (Alkaliphilus oremlandii (strain OhILAs) (Clostridium oremlandii (strain OhILAs))).